A 446-amino-acid polypeptide reads, in one-letter code: Ribosome biogenesis protein WDR12 homolog (446 aa).

The ubiquitin-like (UBL) domain stretch occupies residues 21–105 (VQITFFSKDK…ETILKIECII (85 aa)). WD repeat units lie at residues 171–211 (KCSG…LVEK) and 216–255 (GHER…EATI). The disordered stretch occupies residues 256–275 (YEKEEEESSAKKKRKKDTRT). WD repeat units lie at residues 284–324 (GHRD…EVSR), 326–365 (KGPK…GAMV), 371–412 (GHQN…SSLF), and 416–446 (GHED…FETS).

This sequence belongs to the WD repeat WDR12/YTM1 family.

The protein resides in the nucleus. It localises to the nucleolus. The protein localises to the nucleoplasm. Required for maturation of ribosomal RNAs and formation of the large ribosomal subunit. This is Ribosome biogenesis protein WDR12 homolog from Caenorhabditis briggsae.